Consider the following 213-residue polypeptide: Ribonuclease HII (213 aa).

The RNase H type-2 domain maps to 25–213; the sequence is KTLCGVDEAG…FKPVKQLLPH (189 aa). A divalent metal cation-binding residues include Asp-31, Glu-32, and Asp-124.

This sequence belongs to the RNase HII family. It depends on Mn(2+) as a cofactor. The cofactor is Mg(2+).

The protein localises to the cytoplasm. It carries out the reaction Endonucleolytic cleavage to 5'-phosphomonoester.. Functionally, endonuclease that specifically degrades the RNA of RNA-DNA hybrids. The chain is Ribonuclease HII from Magnetococcus marinus (strain ATCC BAA-1437 / JCM 17883 / MC-1).